A 134-amino-acid polypeptide reads, in one-letter code: Putative nickel-responsive regulator (134 aa).

Residues H78, H89, H91, and C97 each coordinate Ni(2+).

It belongs to the transcriptional regulatory CopG/NikR family. It depends on Ni(2+) as a cofactor.

In terms of biological role, transcriptional regulator. The protein is Putative nickel-responsive regulator of Chlorobaculum parvum (strain DSM 263 / NCIMB 8327) (Chlorobium vibrioforme subsp. thiosulfatophilum).